The following is a 230-amino-acid chain: Type II restriction enzyme MjaV (230 aa).

The catalysed reaction is Endonucleolytic cleavage of DNA to give specific double-stranded fragments with terminal 5'-phosphates.. A P subtype restriction enzyme that recognizes the double-stranded sequence 5'-GTAC-3'; the cleavage site is unknown. The polypeptide is Type II restriction enzyme MjaV (mjaVR) (Methanocaldococcus jannaschii (strain ATCC 43067 / DSM 2661 / JAL-1 / JCM 10045 / NBRC 100440) (Methanococcus jannaschii)).